A 498-amino-acid chain; its full sequence is MRTNPTTSRPGVSTSEEKSTGRIDQIIGPVLDVTFPPGKLPYIYNALVVQSRDTADKQINVTCEVQQLLGNNRVRAVAMSATDGLMRGMEVIDTGAPLSVPVGGATLGRIFNVLGEPVDNLGPVDSSATFPIHRSAPAFIELDTKLSIFETGIKVVDLLAPYRRGGKIGLFGGAGVGKTVLIMELINNIAKAHGGVSVFGGVGERTREGNDLYMEMKESGVINEKNIEESKVALVYGQMNEPPGARMRVGLTALTMAEYFRDVNKQDVLLFIDNIFRFVQAGSEVSALLGRMPSAVGYQPTLSTEMGSLQERIASTKKGSITSIQAVYVPADDLTDPAPATTFAHLDATTVLSRGLASKGIYPAVDPLDSTSTMLQPRIVGNEHYETAQRVKETLQRYKELQDIIAILGLDELSEEDRLTVARARKIERFLSQPFFVAEVFTGSPGKYVALAETIRGFQLILSGELDGLPEQAFYLVGNIDEASTKAITLEEENKSQK.

Residues 1–14 (MRTNPTTSRPGVST) show a composition bias toward polar residues. The tract at residues 1 to 20 (MRTNPTTSRPGVSTSEEKST) is disordered. 172–179 (GGAGVGKT) is an ATP binding site.

It belongs to the ATPase alpha/beta chains family. F-type ATPases have 2 components, CF(1) - the catalytic core - and CF(0) - the membrane proton channel. CF(1) has five subunits: alpha(3), beta(3), gamma(1), delta(1), epsilon(1). CF(0) has four main subunits: a(1), b(1), b'(1) and c(9-12).

It localises to the plastid. Its subcellular location is the chloroplast thylakoid membrane. The enzyme catalyses ATP + H2O + 4 H(+)(in) = ADP + phosphate + 5 H(+)(out). Functionally, produces ATP from ADP in the presence of a proton gradient across the membrane. The catalytic sites are hosted primarily by the beta subunits. The chain is ATP synthase subunit beta, chloroplastic from Hordeum vulgare (Barley).